Reading from the N-terminus, the 94-residue chain is Small ribosomal subunit protein uS17 (94 aa).

The protein belongs to the universal ribosomal protein uS17 family. Part of the 30S ribosomal subunit.

In terms of biological role, one of the primary rRNA binding proteins, it binds specifically to the 5'-end of 16S ribosomal RNA. The polypeptide is Small ribosomal subunit protein uS17 (Deinococcus geothermalis (strain DSM 11300 / CIP 105573 / AG-3a)).